Consider the following 404-residue polypeptide: Cysteine desulfurase IscS (404 aa).

Pyridoxal 5'-phosphate-binding positions include 75 to 76 (AT), N155, Q183, and 203 to 205 (SAH). At K206 the chain carries N6-(pyridoxal phosphate)lysine. T243 is a binding site for pyridoxal 5'-phosphate. Catalysis depends on C328, which acts as the Cysteine persulfide intermediate. Position 328 (C328) interacts with [2Fe-2S] cluster.

Belongs to the class-V pyridoxal-phosphate-dependent aminotransferase family. NifS/IscS subfamily. In terms of assembly, homodimer. Forms a heterotetramer with IscU, interacts with other sulfur acceptors. Pyridoxal 5'-phosphate is required as a cofactor.

It is found in the cytoplasm. It catalyses the reaction (sulfur carrier)-H + L-cysteine = (sulfur carrier)-SH + L-alanine. It participates in cofactor biosynthesis; iron-sulfur cluster biosynthesis. In terms of biological role, master enzyme that delivers sulfur to a number of partners involved in Fe-S cluster assembly, tRNA modification or cofactor biosynthesis. Catalyzes the removal of elemental sulfur atoms from cysteine to produce alanine. Functions as a sulfur delivery protein for Fe-S cluster synthesis onto IscU, an Fe-S scaffold assembly protein, as well as other S acceptor proteins. The chain is Cysteine desulfurase IscS from Pseudomonas syringae pv. tomato (strain ATCC BAA-871 / DC3000).